A 728-amino-acid chain; its full sequence is Myb-related protein A (728 aa).

A disordered region spans residues 1-31 (MAGRARSEDEEEDGQFTEHDYDVSLQKGPKK). HTH myb-type domains follow at residues 30-80 (KKPW…HKVL), 81-136 (SPEL…NPDV), and 137-187 (KKSS…KRKV). 3 consecutive DNA-binding regions (H-T-H motif) follow at residues 57 to 80 (WGVVARHFINRSEVQCQHRWHKVL), 109 to 132 (WSIIAKHLKGRIGKQCRERWHNHL), and 160 to 183 (WAEIAKLLPGRTDNSIKNHWNSTM). A transcriptional activation domain region spans residues 230-293 (IPRYSSLSHD…RKRVPSGSSL (64 aa)). A negative regulatory domain region spans residues 296–534 (SESYHMGESM…IRRSLMAVTP (239 aa)).

In terms of assembly, component of the DREAM complex.

The protein resides in the nucleus. Functionally, transcription factor that specifically recognizes the sequence 5'-YAAC[GT]G-3'. Acts as a master regulator of male meiosis by promoting expression of piRNAs. The piRNA metabolic process mediates the repression of transposable elements during meiosis by forming complexes composed of piRNAs and Piwi proteins and governs the methylation and subsequent repression of transposons, which is essential for the germline integrity. The sequence is that of Myb-related protein A (mybl1) from Xenopus laevis (African clawed frog).